Reading from the N-terminus, the 112-residue chain is uncharacterized protein (112 aa).

This is an uncharacterized protein from Acanthamoeba polyphaga mimivirus (APMV).